Here is a 418-residue protein sequence, read N- to C-terminus: UDP-N-acetylglucosamine 1-carboxyvinyltransferase (418 aa).

22-23 (KN) serves as a coordination point for phosphoenolpyruvate. Arg-91 provides a ligand contact to UDP-N-acetyl-alpha-D-glucosamine. Catalysis depends on Cys-115, which acts as the Proton donor. A 2-(S-cysteinyl)pyruvic acid O-phosphothioketal modification is found at Cys-115. Residues 120-124 (RPVDL), Asp-305, and Ile-327 contribute to the UDP-N-acetyl-alpha-D-glucosamine site.

The protein belongs to the EPSP synthase family. MurA subfamily.

It is found in the cytoplasm. It catalyses the reaction phosphoenolpyruvate + UDP-N-acetyl-alpha-D-glucosamine = UDP-N-acetyl-3-O-(1-carboxyvinyl)-alpha-D-glucosamine + phosphate. Its pathway is cell wall biogenesis; peptidoglycan biosynthesis. Functionally, cell wall formation. Adds enolpyruvyl to UDP-N-acetylglucosamine. This is UDP-N-acetylglucosamine 1-carboxyvinyltransferase from Wigglesworthia glossinidia brevipalpis.